Reading from the N-terminus, the 1024-residue chain is Beta-galactosidase (1024 aa).

Residues N103 and D202 each contribute to the substrate site. Residue D202 participates in Na(+) binding. Mg(2+) contacts are provided by E417, H419, and E462. Residues E462 and 538–541 each bind substrate; that span reads EYAH. The active-site Proton donor is the E462. The active-site Nucleophile is E538. A Mg(2+)-binding site is contributed by N598. Na(+)-binding residues include F602 and N605. Residues N605 and W1000 each contribute to the substrate site.

This sequence belongs to the glycosyl hydrolase 2 family. Homotetramer. The cofactor is Mg(2+). Requires Na(+) as cofactor.

It carries out the reaction Hydrolysis of terminal non-reducing beta-D-galactose residues in beta-D-galactosides.. This Escherichia coli O1:K1 / APEC protein is Beta-galactosidase.